Consider the following 113-residue polypeptide: UPF0122 protein MGAS10270_Spy1030 (113 aa).

This sequence belongs to the UPF0122 family.

Its function is as follows. Might take part in the signal recognition particle (SRP) pathway. This is inferred from the conservation of its genetic proximity to ftsY/ffh. May be a regulatory protein. The chain is UPF0122 protein MGAS10270_Spy1030 from Streptococcus pyogenes serotype M2 (strain MGAS10270).